A 172-amino-acid polypeptide reads, in one-letter code: C-phycocyanin beta subunit (172 aa).

N72 is subject to N4-methylasparagine. The (2R,3E)-phycocyanobilin site is built by C82 and C153.

It belongs to the phycobiliprotein family. In terms of assembly, the alpha and beta subunits exhibit high affinity for one another and form heterodimers. These heterodimers form heterohexamers of 3 alpha and 3 beta subunits which, in turn, aggregate into a heterododecamer consisting of 2 heterohexamers. In terms of processing, contains two covalently linked bilin chromophores.

It is found in the cellular thylakoid membrane. In terms of biological role, light-harvesting photosynthetic bile pigment-protein from the phycobiliprotein complex (phycobilisome, PBS). Phycocyanin is the major phycobiliprotein in the PBS rod. The protein is C-phycocyanin beta subunit (cpcB) of Arthrospira platensis (Spirulina platensis).